The primary structure comprises 429 residues: Histidine--tRNA ligase (429 aa).

Belongs to the class-II aminoacyl-tRNA synthetase family. In terms of assembly, homodimer.

The protein resides in the cytoplasm. It carries out the reaction tRNA(His) + L-histidine + ATP = L-histidyl-tRNA(His) + AMP + diphosphate + H(+). In Prochlorococcus marinus (strain MIT 9515), this protein is Histidine--tRNA ligase.